An 876-amino-acid polypeptide reads, in one-letter code: Leucine--tRNA ligase (876 aa).

The short motif at Pro43–His53 is the 'HIGH' region element. Positions Lys632–Ser636 match the 'KMSKS' region motif. Lys635 serves as a coordination point for ATP.

This sequence belongs to the class-I aminoacyl-tRNA synthetase family.

It is found in the cytoplasm. It carries out the reaction tRNA(Leu) + L-leucine + ATP = L-leucyl-tRNA(Leu) + AMP + diphosphate. This Rhizobium etli (strain CIAT 652) protein is Leucine--tRNA ligase.